We begin with the raw amino-acid sequence, 802 residues long: MSLSSLSRALARSARSSRQRQGSLLGGHGGLRASSPPLPCGELGFLRSYVTSVIGNRAAVASGAGKGGDWRFLLASRQFRRLFSDKSKKNHGKHSEEENKGKGDESDKSDSKKQSSSGDQWNFEESIKQFKDMIAPLFLFGLLLLSASASSSEQEISFQEFKNKLLEPGLVDHIVVSNKSIAKVYVRSSPSIDRIQDSDIHITTSHLPGIESPSSYKYYFNIGSVDSFEEKLQEAQKALEIDPHYYVPITYTTEAKWFEEVMKYVPTVLIIGLIYLLGKRIQNGFTVGGGPGKGGRSIFSIGKVQVTKLDKNSKNKVFFKDVAGCDEAKQEIMEFVHFLKNPKKYEELGAKIPKGALLVGPPGTGKTLLAKATAGESGVPFLSISGSDFMEMFVGVGPSRVRNLFQEARQCSPSIVFIDEIDAIGRARGRGGFSGGHDERESTLNQLLVEMDGFGTTSGVVVLAGTNRPDILDKALLRPGRFDRQISIDKPDIKGRDQIFRIYLKKLKLDKEPSFYSQRLAALTPGFAGADIANVCNEAALIAARSEGTLITMQHFESAIDRVIGGLEKKNKVISKLERRTVAYHESGHAVAGWFLEHAEPLLKVTIVPRGTAALGFAQYVPNDNLLMTKEQLFDMTCMTLGGRAAEEVLIGKISTGAQNDLEKVTKMTYAQVAVYGFSEKVGLLSFPQREDGFEMSKPYSSQTASIIDTEVREWVAKAYEKTVELIKQHKDQVAQIAELLLEKEVLHQDDLVQVLGERPFKTLEPTNYDRFKQGFQDEDSNRNAELSNADGASSLGEAVAS.

The N-terminal 21 residues, 1–21 (MSLSSLSRALARSARSSRQRQ), are a transit peptide targeting the mitochondrion. Low complexity predominate over residues 1–23 (MSLSSLSRALARSARSSRQRQGS). Disordered regions lie at residues 1 to 33 (MSLS…GLRA) and 85 to 120 (DKSK…SGDQ). A compositionally biased stretch (basic and acidic residues) spans 85–113 (DKSKKNHGKHSEEENKGKGDESDKSDSKK). The chain crosses the membrane as a helical span at residues 133–153 (MIAPLFLFGLLLLSASASSSE). 360–367 (GPPGTGKT) serves as a coordination point for ATP. Zn(2+) is bound at residue H585. The active site involves E586. H589 and D661 together coordinate Zn(2+). The segment at 773–802 (KQGFQDEDSNRNAELSNADGASSLGEAVAS) is disordered.

In the N-terminal section; belongs to the AAA ATPase family. This sequence in the C-terminal section; belongs to the peptidase M41 family. Requires Zn(2+) as cofactor.

The protein resides in the mitochondrion inner membrane. In terms of biological role, probable ATP-dependent zinc metallopeptidase. The protein is ATP-dependent zinc metalloprotease FTSH 3, mitochondrial (FTSH3) of Oryza sativa subsp. japonica (Rice).